The chain runs to 342 residues: MLREALRKAAAGEPLSEGEAERALETIMEGGASPEATAALLTALRVRGESVQEIVGFARAMRRFAARVRAPEGVVDTCGTGGDAKGTINVSTAAAFVARGAGVVIAKHGNRAATSRAGSADVLEALGAAIELSPEQVSRCIEEAGIGFMFARTHHPAMRHVAPVRAELPFRTVFNLLGPLTNPAGARRQLVGVFSAGYVRPMAEALEGLGAERALVVHGRDGMDEITVTGPTLVAEVGGGGVEEYEISPEDFGLSRHAPDGLLGGDAHLNARILRDVLSGEERGASRDVIVLNAGAAIYVAGKAPSIEEGVRLAEGSLESGAALAALERFVRVSRRLAGRGA.

Residues Gly-79, 82–83 (GD), Thr-87, 89–92 (NVST), 107–115 (KHGNRAATS), and Ser-119 each bind 5-phospho-alpha-D-ribose 1-diphosphate. Gly-79 is an anthranilate binding site. Ser-91 is a binding site for Mg(2+). Asn-110 serves as a coordination point for anthranilate. An anthranilate-binding site is contributed by Arg-165. Mg(2+) is bound by residues Asp-224 and Glu-225.

Belongs to the anthranilate phosphoribosyltransferase family. As to quaternary structure, homodimer. It depends on Mg(2+) as a cofactor.

It catalyses the reaction N-(5-phospho-beta-D-ribosyl)anthranilate + diphosphate = 5-phospho-alpha-D-ribose 1-diphosphate + anthranilate. Its pathway is amino-acid biosynthesis; L-tryptophan biosynthesis; L-tryptophan from chorismate: step 2/5. Functionally, catalyzes the transfer of the phosphoribosyl group of 5-phosphorylribose-1-pyrophosphate (PRPP) to anthranilate to yield N-(5'-phosphoribosyl)-anthranilate (PRA). In Rubrobacter xylanophilus (strain DSM 9941 / JCM 11954 / NBRC 16129 / PRD-1), this protein is Anthranilate phosphoribosyltransferase.